Consider the following 486-residue polypeptide: Scarecrow-like protein 15 (486 aa).

The interval 1–28 (MKIPASSPQDTTNNNNNTNSTDSNHLSM) is disordered. A compositionally biased stretch (low complexity) spans 10 to 24 (DTTNNNNNTNSTDSN). The GRAS domain occupies 113 to 485 (DSVDNGGFDF…RALVATSAWR (373 aa)). The segment at 120 to 179 (FDFIEDLIRVVDCVESDELQLAQVVLSRLNQRLRSPAGRPLQRAAFYFKEALGSFLTGSN) is leucine repeat I (LRI). The tract at residues 198–266 (IKEYSGISPI…VSGGFLRVTA (69 aa)) is VHIID. The short motif at 232-236 (VHVVD) is the VHIID element. Residues 278–310 (LVKENLTQFAAEMKIRFQIEFVLMKTFEMLSFK) are leucine repeat II (LRII). Residues 320-410 (TVVLISPAIF…AFVLRPKISA (91 aa)) are PFYRE. The interval 413–485 (ETAADRRHTG…RALVATSAWR (73 aa)) is SAW.

This sequence belongs to the GRAS family. As to expression, expressed in seedlings, roots, leaves and flowers.

It is found in the nucleus. Its function is as follows. Probable transcription factor involved in plant development. This is Scarecrow-like protein 15 (SCL15) from Arabidopsis thaliana (Mouse-ear cress).